A 261-amino-acid chain; its full sequence is Putative cytochrome YdhU (261 aa).

A helical membrane pass occupies residues 25–45 (FWPVWLIIAGVLLVGMWLVLG). Residue H77 coordinates heme b. Transmembrane regions (helical) follow at residues 81 to 101 (ALLFVLLLASGLINHFAMVGA), 108 to 128 (VAVHEVCGFLLLACWLGFVLI), and 182 to 202 (VAYVGVMYGLLPLLLLTGLLC). H111 is a binding site for heme b. Heme b-binding residues include H223 and H237. The helical transmembrane segment at 224–244 (FALAFISLFFIFGHLYLCTTG) threads the bilayer. Residue H237 participates in a menaquinone binding.

Belongs to the PhsC family. It depends on heme as a cofactor.

Its subcellular location is the cell inner membrane. The protein is Putative cytochrome YdhU (ydhU) of Escherichia coli (strain K12).